The sequence spans 180 residues: tRNA-splicing endonuclease (180 aa).

Active-site residues include tyrosine 117, histidine 125, and lysine 156.

Belongs to the tRNA-intron endonuclease family. Archaeal short subfamily. In terms of assembly, homotetramer; although the tetramer contains four active sites, only two participate in the cleavage. Therefore, it should be considered as a dimer of dimers.

The catalysed reaction is pretRNA = a 3'-half-tRNA molecule with a 5'-OH end + a 5'-half-tRNA molecule with a 2',3'-cyclic phosphate end + an intron with a 2',3'-cyclic phosphate and a 5'-hydroxyl terminus.. Endonuclease that removes tRNA introns. Cleaves pre-tRNA at the 5'- and 3'-splice sites to release the intron. The products are an intron and two tRNA half-molecules bearing 2',3' cyclic phosphate and 5'-OH termini. Recognizes a pseudosymmetric substrate in which 2 bulged loops of 3 bases are separated by a stem of 4 bp. In Sulfurisphaera tokodaii (strain DSM 16993 / JCM 10545 / NBRC 100140 / 7) (Sulfolobus tokodaii), this protein is tRNA-splicing endonuclease.